The chain runs to 1047 residues: Probable sucrose-phosphate synthase 2 (1047 aa).

A compositionally biased stretch (basic and acidic residues) spans 101–123 (EGKNAKREAKREREREKARREVT). The disordered stretch occupies residues 101–153 (EGKNAKREAKREREREKARREVTAEMSEDFSEGEKADLPGEIPTPSDNNTKGR). 3 positions are modified to phosphoserine: Ser-127, Ser-131, and Ser-159. A disordered region spans residues 712–731 (KSGSNNGVDTNLDAEDRAAE).

It belongs to the glycosyltransferase 1 family. In terms of assembly, homodimer or homotetramer. As to expression, expressed in roots, cauline leaves, flower buds, flowers and anthers. Highly expressed in maturing nectaries.

It carries out the reaction beta-D-fructose 6-phosphate + UDP-alpha-D-glucose = sucrose 6(F)-phosphate + UDP + H(+). The protein operates within glycan biosynthesis; sucrose biosynthesis; sucrose from D-fructose 6-phosphate and UDP-alpha-D-glucose: step 1/2. With respect to regulation, activity is regulated by phosphorylation and moderated by concentration of metabolites and light. In terms of biological role, plays a role in photosynthetic sucrose synthesis by catalyzing the rate-limiting step of sucrose biosynthesis from UDP-glucose and fructose- 6-phosphate. Involved in the regulation of carbon partitioning in the leaves of plants. May regulate the synthesis of sucrose and therefore play a major role as a limiting factor in the export of photoassimilates out of the leaf. Plays a role for sucrose availability that is essential for plant growth and fiber elongation. Required for nectar secretion. The chain is Probable sucrose-phosphate synthase 2 (SPS2) from Arabidopsis thaliana (Mouse-ear cress).